Here is a 393-residue protein sequence, read N- to C-terminus: uncharacterized protein (393 aa).

The [4Fe-4S] cluster site is built by Cys-72, Cys-82, Cys-85, and Cys-160. Positions 215, 245, 267, and 313 each coordinate S-adenosyl-L-methionine. The active-site Nucleophile is Cys-340.

This sequence belongs to the class I-like SAM-binding methyltransferase superfamily. RNA M5U methyltransferase family.

This is an uncharacterized protein from Nitrosomonas europaea (strain ATCC 19718 / CIP 103999 / KCTC 2705 / NBRC 14298).